We begin with the raw amino-acid sequence, 127 residues long: MKTVAGLLYSKDHEWVKVEGNEAYIGITDFAQHALGEIVFVELPEVDDEIAQGDAFSVVESVKAASDAYSPVSGKVLEVNEELDGAPELLNEDAFANWIIKVELTNPSELEGLLSDKEYAEFCEKEA.

Residues 22–103 enclose the Lipoyl-binding domain; it reads EAYIGITDFA…AFANWIIKVE (82 aa). Lys-63 carries the post-translational modification N6-lipoyllysine.

It belongs to the GcvH family. As to quaternary structure, the glycine cleavage system is composed of four proteins: P, T, L and H. The cofactor is (R)-lipoate.

Functionally, the glycine cleavage system catalyzes the degradation of glycine. The H protein shuttles the methylamine group of glycine from the P protein to the T protein. The protein is Glycine cleavage system H protein of Alkaliphilus oremlandii (strain OhILAs) (Clostridium oremlandii (strain OhILAs)).